The primary structure comprises 355 residues: UDP-N-acetylglucosamine--N-acetylmuramyl-(pentapeptide) pyrophosphoryl-undecaprenol N-acetylglucosamine transferase (355 aa).

Residues 14–16, asparagine 126, arginine 162, serine 190, isoleucine 244, and glutamine 289 each bind UDP-N-acetyl-alpha-D-glucosamine; that span reads TGG.

It belongs to the glycosyltransferase 28 family. MurG subfamily.

Its subcellular location is the cell inner membrane. It carries out the reaction di-trans,octa-cis-undecaprenyl diphospho-N-acetyl-alpha-D-muramoyl-L-alanyl-D-glutamyl-meso-2,6-diaminopimeloyl-D-alanyl-D-alanine + UDP-N-acetyl-alpha-D-glucosamine = di-trans,octa-cis-undecaprenyl diphospho-[N-acetyl-alpha-D-glucosaminyl-(1-&gt;4)]-N-acetyl-alpha-D-muramoyl-L-alanyl-D-glutamyl-meso-2,6-diaminopimeloyl-D-alanyl-D-alanine + UDP + H(+). Its pathway is cell wall biogenesis; peptidoglycan biosynthesis. Cell wall formation. Catalyzes the transfer of a GlcNAc subunit on undecaprenyl-pyrophosphoryl-MurNAc-pentapeptide (lipid intermediate I) to form undecaprenyl-pyrophosphoryl-MurNAc-(pentapeptide)GlcNAc (lipid intermediate II). This Paracidovorax citrulli (strain AAC00-1) (Acidovorax citrulli) protein is UDP-N-acetylglucosamine--N-acetylmuramyl-(pentapeptide) pyrophosphoryl-undecaprenol N-acetylglucosamine transferase.